The sequence spans 75 residues: Cytochrome c oxidase assembly factor 5 (75 aa).

The CHCH domain maps to 28 to 66 (QHDCVVKEGKKPSECLKEGHCRSMQVAFFECKRSMLDTR). The short motif at 31–42 (CVVKEGKKPSEC) is the Cx10C motif element. 2 disulfide bridges follow: Cys31–Cys58 and Cys42–Cys48. A Cx9C motif motif is present at residues 48–58 (CRSMQVAFFEC).

This sequence belongs to the PET191 family.

Its function is as follows. Involved in an early step of the mitochondrial complex IV assembly process. This chain is Cytochrome c oxidase assembly factor 5 (coa5), found in Danio rerio (Zebrafish).